Reading from the N-terminus, the 317-residue chain is 4-hydroxy-3-methylbut-2-enyl diphosphate reductase (317 aa).

Cysteine 12 is a [4Fe-4S] cluster binding site. (2E)-4-hydroxy-3-methylbut-2-enyl diphosphate-binding residues include histidine 41 and histidine 74. Residues histidine 41 and histidine 74 each coordinate dimethylallyl diphosphate. 2 residues coordinate isopentenyl diphosphate: histidine 41 and histidine 74. Cysteine 97 contacts [4Fe-4S] cluster. Histidine 125 lines the (2E)-4-hydroxy-3-methylbut-2-enyl diphosphate pocket. A dimethylallyl diphosphate-binding site is contributed by histidine 125. Histidine 125 serves as a coordination point for isopentenyl diphosphate. Glutamate 127 (proton donor) is an active-site residue. Threonine 168 is a (2E)-4-hydroxy-3-methylbut-2-enyl diphosphate binding site. [4Fe-4S] cluster is bound at residue cysteine 198. Positions 226, 227, 228, and 270 each coordinate (2E)-4-hydroxy-3-methylbut-2-enyl diphosphate. Dimethylallyl diphosphate is bound by residues serine 226, serine 227, asparagine 228, and serine 270. Positions 226, 227, 228, and 270 each coordinate isopentenyl diphosphate.

The protein belongs to the IspH family. As to quaternary structure, homodimer. [4Fe-4S] cluster serves as cofactor.

The enzyme catalyses isopentenyl diphosphate + 2 oxidized [2Fe-2S]-[ferredoxin] + H2O = (2E)-4-hydroxy-3-methylbut-2-enyl diphosphate + 2 reduced [2Fe-2S]-[ferredoxin] + 2 H(+). It carries out the reaction dimethylallyl diphosphate + 2 oxidized [2Fe-2S]-[ferredoxin] + H2O = (2E)-4-hydroxy-3-methylbut-2-enyl diphosphate + 2 reduced [2Fe-2S]-[ferredoxin] + 2 H(+). Its pathway is isoprenoid biosynthesis; dimethylallyl diphosphate biosynthesis; dimethylallyl diphosphate from (2E)-4-hydroxy-3-methylbutenyl diphosphate: step 1/1. It functions in the pathway isoprenoid biosynthesis; isopentenyl diphosphate biosynthesis via DXP pathway; isopentenyl diphosphate from 1-deoxy-D-xylulose 5-phosphate: step 6/6. Its function is as follows. Catalyzes the conversion of 1-hydroxy-2-methyl-2-(E)-butenyl 4-diphosphate (HMBPP) into a mixture of isopentenyl diphosphate (IPP) and dimethylallyl diphosphate (DMAPP). Acts in the terminal step of the DOXP/MEP pathway for isoprenoid precursor biosynthesis. This Yersinia enterocolitica serotype O:8 / biotype 1B (strain NCTC 13174 / 8081) protein is 4-hydroxy-3-methylbut-2-enyl diphosphate reductase.